A 415-amino-acid chain; its full sequence is Serine--tRNA ligase (415 aa).

231–233 (TAE) contacts L-serine. An ATP-binding site is contributed by 262-264 (RSE). Position 285 (E285) interacts with L-serine. An ATP-binding site is contributed by 349-352 (EISS). S383 is an L-serine binding site.

This sequence belongs to the class-II aminoacyl-tRNA synthetase family. Type-1 seryl-tRNA synthetase subfamily. In terms of assembly, homodimer. The tRNA molecule binds across the dimer.

It is found in the cytoplasm. It catalyses the reaction tRNA(Ser) + L-serine + ATP = L-seryl-tRNA(Ser) + AMP + diphosphate + H(+). It carries out the reaction tRNA(Sec) + L-serine + ATP = L-seryl-tRNA(Sec) + AMP + diphosphate + H(+). It participates in aminoacyl-tRNA biosynthesis; selenocysteinyl-tRNA(Sec) biosynthesis; L-seryl-tRNA(Sec) from L-serine and tRNA(Sec): step 1/1. In terms of biological role, catalyzes the attachment of serine to tRNA(Ser). Is also able to aminoacylate tRNA(Sec) with serine, to form the misacylated tRNA L-seryl-tRNA(Sec), which will be further converted into selenocysteinyl-tRNA(Sec). The chain is Serine--tRNA ligase from Helicobacter pylori (strain J99 / ATCC 700824) (Campylobacter pylori J99).